Here is a 64-residue protein sequence, read N- to C-terminus: MPDVKCVCCKEGKECACFGQDCCKTGECCKDGTCCGICTNAACKCANGCKCGSGCSCTEGNCAC.

This sequence belongs to the metallothionein superfamily. Type 4 family.

Functionally, metallothioneins have a high content of cysteine residues that bind various heavy metals. This Strongylocentrotus purpuratus (Purple sea urchin) protein is Metallothionein-A (MTA).